A 316-amino-acid polypeptide reads, in one-letter code: 4-amino-5-hydroxymethyl-2-methylpyrimidine phosphate synthase (316 aa).

K66 is modified (N6-(pyridoxal phosphate)lysine). The active site involves H70. 118 to 121 (GEFG) contributes to the pyridoxal 5'-phosphate binding site. The CCCFC; essential for catalytic activity, may be the site of iron coordination motif lies at 191-195 (CCCFC).

Belongs to the NMT1/THI5 family. Homodimer. Fe cation serves as cofactor.

It carries out the reaction N(6)-(pyridoxal phosphate)-L-lysyl-[4-amino-5-hydroxymethyl-2-methylpyrimidine phosphate synthase] + L-histidyl-[4-amino-5-hydroxymethyl-2-methylpyrimidine phosphate synthase] + 2 Fe(3+) + 4 H2O = L-lysyl-[4-amino-5-hydroxymethyl-2-methylpyrimidine phosphate synthase] + (2S)-2-amino-5-hydroxy-4-oxopentanoyl-[4-amino-5-hydroxymethyl-2-methylpyrimidine phosphate synthase] + 4-amino-2-methyl-5-(phosphooxymethyl)pyrimidine + 3-oxopropanoate + 2 Fe(2+) + 2 H(+). It functions in the pathway cofactor biosynthesis; thiamine diphosphate biosynthesis. Functionally, responsible for the formation of the pyrimidine heterocycle in the thiamine biosynthesis pathway. Catalyzes the formation of hydroxymethylpyrimidine phosphate (HMP-P) from histidine and pyridoxal phosphate (PLP). The protein uses PLP and the active site histidine to form HMP-P, generating an inactive enzyme. The enzyme can only undergo a single turnover, which suggests it is a suicide enzyme. In Legionella pneumophila subsp. pneumophila (strain Philadelphia 1 / ATCC 33152 / DSM 7513), this protein is 4-amino-5-hydroxymethyl-2-methylpyrimidine phosphate synthase.